A 447-amino-acid polypeptide reads, in one-letter code: Alkylglycerol monooxygenase (447 aa).

A run of 2 helical transmembrane segments spans residues 43-63 and 111-131; these read ATPF…ILKG and WDST…YYWF. Positions 119-249 constitute a Fatty acid hydroxylase domain; it reads FTFLGVDFGY…LIIWDRIFGT (131 aa). Residues 132-136 carry the Histidine box-1 motif; the sequence is HRMAH. The Histidine box-2 motif lies at 145–149; sequence HQAHH. A helical transmembrane segment spans residues 170–190; that stretch reads SWVFYCPLALFIPPSVFAVHI. Positions 221-225 match the Histidine box-3 motif; that stretch reads HRVHH. A run of 3 helical transmembrane segments spans residues 340–360, 363–383, and 413–433; these read VLQF…TAVL, VTLL…GFLL, and IPSL…FWGV.

It belongs to the sterol desaturase family. TMEM195 subfamily. Fe cation is required as a cofactor. In terms of tissue distribution, highly expressed in lever and small intestine.

It is found in the endoplasmic reticulum membrane. It catalyses the reaction 1-O-(1,2-saturated-alkyl)-sn-glycerol + (6R)-L-erythro-5,6,7,8-tetrahydrobiopterin + O2 = a 1-(1-hydroxyalkyl)-sn-glycerol + (6R)-L-erythro-6,7-dihydrobiopterin + H2O. In terms of biological role, glyceryl-ether monooxygenase that cleaves the O-alkyl bond of ether lipids. Ether lipids are essential components of brain membranes. The chain is Alkylglycerol monooxygenase (Agmo) from Mus musculus (Mouse).